We begin with the raw amino-acid sequence, 414 residues long: MSLVDLGKRLLEAARKGQDDEVRTLMANGAPFTTDWLGTSPLHLAAQYGHYSTAEVLLRAGVSRDARTKVDRTPLHMAAADGHVHIVELLVRSGADVNAKDMLQMTALHWATEHHHRDVVELLIKYGADVYAFSKFDKSAFDIAMEKNNTEILVMLQEAMQNQVNTNHERANPVANPVTVTAPFIFTSGEVINLASFVSSANTKATSAHLEEMEEGNSLDSSTQQVVGSGGQRVITIVTDGVPLGNIQTSLPAGGIGQPFIVTMQDGQQVLTVPAGQVAEETIIEDEEEEEEKLPLVKRPRMAEMTNRVEEMKEGSERELLQQQLQEANRRAQEYRHQLLKKEQEAEQYRLRLEAMAQQQTNGVEVDVTVVEEVAEVDAVVVTEGDEVERATQVMKSGRTTEPHTNVSIETISS.

ANK repeat units follow at residues 5–34 (DLGK…PFTT), 37–66 (LGTS…SRDA), 70–99 (VDRT…DVNA), 103–132 (LQMT…DVYA), and 136–166 (FDKS…QVNT). S218 bears the Phosphoserine mark. A coiled-coil region spans residues 310 to 362 (EEMKEGSERELLQQQLQEANRRAQEYRHQLLKKEQEAEQYRLRLEAMAQQQTN).

In terms of assembly, heterotetramer of two alpha and two beta subunits. The C-terminal is necessary for the formation of a heterotetrameric GABP-alpha-2/beta-2 complex, and also facilitates homotypic dimerization. Interacts with ADGRB2. In terms of tissue distribution, high levels in thymus, spleen, kidney and intestine.

It localises to the nucleus. Its function is as follows. Transcription factor capable of interacting with purine rich repeats (GA repeats). Must associate with GABP-alpha to bind DNA. This is GA-binding protein subunit beta-2 (Gabpb2) from Mus musculus (Mouse).